The sequence spans 144 residues: Bacilliredoxin BCE_4227 (144 aa).

It belongs to the bacilliredoxin family.

This is Bacilliredoxin BCE_4227 from Bacillus cereus (strain ATCC 10987 / NRS 248).